A 348-amino-acid chain; its full sequence is uncharacterized protein (348 aa).

It is found in the virion. This is an uncharacterized protein from Acanthamoeba polyphaga mimivirus (APMV).